A 215-amino-acid polypeptide reads, in one-letter code: 3-isopropylmalate dehydratase small subunit (215 aa).

The protein belongs to the LeuD family. LeuD type 1 subfamily. As to quaternary structure, heterodimer of LeuC and LeuD.

The enzyme catalyses (2R,3S)-3-isopropylmalate = (2S)-2-isopropylmalate. It functions in the pathway amino-acid biosynthesis; L-leucine biosynthesis; L-leucine from 3-methyl-2-oxobutanoate: step 2/4. Its function is as follows. Catalyzes the isomerization between 2-isopropylmalate and 3-isopropylmalate, via the formation of 2-isopropylmaleate. The chain is 3-isopropylmalate dehydratase small subunit from Marinobacter nauticus (strain ATCC 700491 / DSM 11845 / VT8) (Marinobacter aquaeolei).